The following is a 236-amino-acid chain: Translocon-associated protein subunit alpha (236 aa).

The signal sequence occupies residues 1–20 (MNKLITLLLAVLMIISCVYS). Residues 21 to 163 (DDVEITDDEV…TEKETSFDMD (143 aa)) lie on the Lumenal side of the membrane. 5 N-linked (GlcNAc...) asparagine glycosylation sites follow: N74, N94, N141, N148, and N152. Residues 164 to 184 (SFFLILLGLGFVGGIGYIVYG) traverse the membrane as a helical segment. Topologically, residues 185 to 236 (KMPKQKKVRTVSKVNKNAVRVETEDETAEWLSGTSAASSKVKSVQKVVKKNK) are cytoplasmic.

This sequence belongs to the TRAP-alpha family. As to quaternary structure, heterotrimer of TRAP-alpha, TRAP-beta and TRAP-gamma. Phosphorylated in its cytoplasmic tail.

It localises to the endoplasmic reticulum membrane. In terms of biological role, TRAP proteins are part of a complex whose function is to bind calcium to the ER membrane and thereby regulate the retention of ER resident proteins. This Dictyostelium discoideum (Social amoeba) protein is Translocon-associated protein subunit alpha (ssr1).